A 1024-amino-acid chain; its full sequence is Beta-galactosidase (1024 aa).

Residues asparagine 103 and aspartate 202 each coordinate substrate. Aspartate 202 contributes to the Na(+) binding site. Mg(2+) contacts are provided by glutamate 417, histidine 419, and glutamate 462. Substrate contacts are provided by residues glutamate 462 and 538 to 541; that span reads EYAH. Glutamate 462 serves as the catalytic Proton donor. Glutamate 538 serves as the catalytic Nucleophile. Mg(2+) is bound at residue asparagine 598. 2 residues coordinate Na(+): phenylalanine 602 and asparagine 605. Positions 605 and 1000 each coordinate substrate.

The protein belongs to the glycosyl hydrolase 2 family. In terms of assembly, homotetramer. Mg(2+) serves as cofactor. The cofactor is Na(+).

The enzyme catalyses Hydrolysis of terminal non-reducing beta-D-galactose residues in beta-D-galactosides.. This Shigella dysenteriae serotype 1 (strain Sd197) protein is Beta-galactosidase.